The chain runs to 353 residues: Ribosomal RNA small subunit methyltransferase H (353 aa).

S-adenosyl-L-methionine contacts are provided by residues 50 to 52 (GGY), Asp69, Phe96, Asp117, and Gln124. The disordered stretch occupies residues 276–353 (AAQASRHVPG…PAPQGRGPRR (78 aa)).

The protein belongs to the methyltransferase superfamily. RsmH family.

It is found in the cytoplasm. The catalysed reaction is cytidine(1402) in 16S rRNA + S-adenosyl-L-methionine = N(4)-methylcytidine(1402) in 16S rRNA + S-adenosyl-L-homocysteine + H(+). Its function is as follows. Specifically methylates the N4 position of cytidine in position 1402 (C1402) of 16S rRNA. The sequence is that of Ribosomal RNA small subunit methyltransferase H from Methylorubrum extorquens (strain CM4 / NCIMB 13688) (Methylobacterium extorquens).